An 833-amino-acid chain; its full sequence is Leucine--tRNA ligase (833 aa).

Positions 41–52 (PYPSGVGLHVGH) match the 'HIGH' region motif. A 'KMSKS' region motif is present at residues 610–614 (KMSKS). ATP is bound at residue Lys613.

Belongs to the class-I aminoacyl-tRNA synthetase family.

It is found in the cytoplasm. The catalysed reaction is tRNA(Leu) + L-leucine + ATP = L-leucyl-tRNA(Leu) + AMP + diphosphate. In Streptococcus pneumoniae serotype 2 (strain D39 / NCTC 7466), this protein is Leucine--tRNA ligase.